A 565-amino-acid chain; its full sequence is Dihydroxy-acid dehydratase (565 aa).

Mg(2+) is bound at residue aspartate 80. Cysteine 121 is a binding site for [2Fe-2S] cluster. The Mg(2+) site is built by aspartate 122 and lysine 123. N6-carboxylysine is present on lysine 123. [2Fe-2S] cluster is bound at residue cysteine 194. Glutamate 447 contributes to the Mg(2+) binding site. The active-site Proton acceptor is the serine 473.

The protein belongs to the IlvD/Edd family. Homodimer. It depends on [2Fe-2S] cluster as a cofactor. Mg(2+) serves as cofactor.

The catalysed reaction is (2R)-2,3-dihydroxy-3-methylbutanoate = 3-methyl-2-oxobutanoate + H2O. It catalyses the reaction (2R,3R)-2,3-dihydroxy-3-methylpentanoate = (S)-3-methyl-2-oxopentanoate + H2O. It functions in the pathway amino-acid biosynthesis; L-isoleucine biosynthesis; L-isoleucine from 2-oxobutanoate: step 3/4. It participates in amino-acid biosynthesis; L-valine biosynthesis; L-valine from pyruvate: step 3/4. Its function is as follows. Functions in the biosynthesis of branched-chain amino acids. Catalyzes the dehydration of (2R,3R)-2,3-dihydroxy-3-methylpentanoate (2,3-dihydroxy-3-methylvalerate) into 2-oxo-3-methylpentanoate (2-oxo-3-methylvalerate) and of (2R)-2,3-dihydroxy-3-methylbutanoate (2,3-dihydroxyisovalerate) into 2-oxo-3-methylbutanoate (2-oxoisovalerate), the penultimate precursor to L-isoleucine and L-valine, respectively. The chain is Dihydroxy-acid dehydratase from Chlorobium luteolum (strain DSM 273 / BCRC 81028 / 2530) (Pelodictyon luteolum).